The chain runs to 189 residues: NADH-quinone oxidoreductase subunit B (189 aa).

[4Fe-4S] cluster-binding residues include C39, C40, C104, and C135.

The protein belongs to the complex I 20 kDa subunit family. NDH-1 is composed of 14 different subunits. Subunits NuoB, C, D, E, F, and G constitute the peripheral sector of the complex. [4Fe-4S] cluster serves as cofactor.

Its subcellular location is the cell inner membrane. The catalysed reaction is a quinone + NADH + 5 H(+)(in) = a quinol + NAD(+) + 4 H(+)(out). Functionally, NDH-1 shuttles electrons from NADH, via FMN and iron-sulfur (Fe-S) centers, to quinones in the respiratory chain. The immediate electron acceptor for the enzyme in this species is believed to be a menaquinone. Couples the redox reaction to proton translocation (for every two electrons transferred, four hydrogen ions are translocated across the cytoplasmic membrane), and thus conserves the redox energy in a proton gradient. In Pelodictyon phaeoclathratiforme (strain DSM 5477 / BU-1), this protein is NADH-quinone oxidoreductase subunit B.